Consider the following 378-residue polypeptide: Cytochrome b (378 aa).

Helical transmembrane passes span 34-54, 78-100, 113-133, and 179-199; these read FGSLLGLCLVIQILSGLFLSM, WLLRSIHANGASFFFMCLYCHIG, TWNVGVVIFFLTMGTAFVGYV, and FFSFHFLFPFMIAGLSMVHLL. Positions 84 and 98 each coordinate heme b. Heme b-binding residues include histidine 183 and histidine 197. Histidine 202 serves as a coordination point for a ubiquinone. Helical transmembrane passes span 225 to 245, 289 to 306, 313 to 342, and 350 to 369; these read YSTKDIAGFLVFFFVFFIVVL, LGGVVSLVASIAILFCLP, KFRSLVFYPLNQILFWSFCSIFLLLTWIGM, and IFIGQILTVLYFSYFLLNPL.

Belongs to the cytochrome b family. The main subunits of complex b-c1 are: cytochrome b, cytochrome c1 and the Rieske protein. Heme b is required as a cofactor.

It is found in the mitochondrion inner membrane. Functionally, component of the ubiquinol-cytochrome c reductase complex (complex III or cytochrome b-c1 complex) that is part of the mitochondrial respiratory chain. The b-c1 complex mediates electron transfer from ubiquinol to cytochrome c. Contributes to the generation of a proton gradient across the mitochondrial membrane that is then used for ATP synthesis. The chain is Cytochrome b (mt:Cyt-b) from Loxocorone allax (Goblet worm).